We begin with the raw amino-acid sequence, 185 residues long: dCTP deaminase, dUMP-forming (185 aa).

DCTP is bound by residues 99-104, Asp117, 125-127, Gln146, Tyr159, Lys166, and Gln170; these read KSSIAR and TLE. Residue Glu127 is the Proton donor/acceptor of the active site.

The protein belongs to the dCTP deaminase family. In terms of assembly, homotrimer.

It catalyses the reaction dCTP + 2 H2O = dUMP + NH4(+) + diphosphate. It functions in the pathway pyrimidine metabolism; dUMP biosynthesis; dUMP from dCTP: step 1/1. In terms of biological role, bifunctional enzyme that catalyzes both the deamination of dCTP to dUTP and the hydrolysis of dUTP to dUMP without releasing the toxic dUTP intermediate. The protein is dCTP deaminase, dUMP-forming of Methanospirillum hungatei JF-1 (strain ATCC 27890 / DSM 864 / NBRC 100397 / JF-1).